The chain runs to 658 residues: Trimethylamine N-oxide transport system permease protein TmoV (658 aa).

15 helical membrane-spanning segments follow: residues 20 to 40, 103 to 123, 127 to 147, 153 to 173, 185 to 205, 212 to 232, 273 to 293, 300 to 320, 349 to 369, 420 to 440, 447 to 467, 469 to 489, 517 to 537, 585 to 605, and 627 to 647; these read LGLA…AGLL, IGPI…YYLG, MALL…WDIA, VLVV…ISAW, VLAV…VIFF, GAVA…TLGL, VIML…PGLG, MGSF…LLAV, FLLM…VVPI, FMLS…ALLV, VLAA…RSVI, LYSV…IGVV, IPAI…ILIF, AVGF…AAFI, and FVLG…IMKW. Residues 147–326 form the ABC transmembrane type-1 1 domain; sequence AMQTMSVLVV…LLAVTLDRMS (180 aa). Residues 465-644 enclose the ABC transmembrane type-1 2 domain; that stretch reads SVITLYSVLA…LMALTFDMVI (180 aa).

It belongs to the binding-protein-dependent transport system permease family. The complex is probably composed of two ATP-binding proteins (TmoW), two transmembrane proteins (TmoV) and a solute-binding protein (TmoX).

It localises to the cell inner membrane. In terms of biological role, part of the ABC transporter complex TmoXWV involved in trimethylamine N-oxide (TMAO) import. Responsible for the translocation of the substrate across the membrane. Is specific for TMAO and essential for TMAO metabolism. This Ruegeria pomeroyi (strain ATCC 700808 / DSM 15171 / DSS-3) (Silicibacter pomeroyi) protein is Trimethylamine N-oxide transport system permease protein TmoV.